Here is a 415-residue protein sequence, read N- to C-terminus: Serine hydroxymethyltransferase (415 aa).

(6S)-5,6,7,8-tetrahydrofolate is bound by residues Leu-121 and 125–127 (GHL). Lys-229 carries the post-translational modification N6-(pyridoxal phosphate)lysine. 352 to 354 (TPF) provides a ligand contact to (6S)-5,6,7,8-tetrahydrofolate.

It belongs to the SHMT family. In terms of assembly, homodimer. Requires pyridoxal 5'-phosphate as cofactor.

Its subcellular location is the cytoplasm. It catalyses the reaction (6R)-5,10-methylene-5,6,7,8-tetrahydrofolate + glycine + H2O = (6S)-5,6,7,8-tetrahydrofolate + L-serine. It functions in the pathway one-carbon metabolism; tetrahydrofolate interconversion. The protein operates within amino-acid biosynthesis; glycine biosynthesis; glycine from L-serine: step 1/1. In terms of biological role, catalyzes the reversible interconversion of serine and glycine with tetrahydrofolate (THF) serving as the one-carbon carrier. This reaction serves as the major source of one-carbon groups required for the biosynthesis of purines, thymidylate, methionine, and other important biomolecules. Also exhibits THF-independent aldolase activity toward beta-hydroxyamino acids, producing glycine and aldehydes, via a retro-aldol mechanism. The chain is Serine hydroxymethyltransferase from Chromobacterium violaceum (strain ATCC 12472 / DSM 30191 / JCM 1249 / CCUG 213 / NBRC 12614 / NCIMB 9131 / NCTC 9757 / MK).